The sequence spans 473 residues: 6-phospho-beta-glucosidase (473 aa).

Glu-174 acts as the Proton donor in catalysis. Glu-366 functions as the Nucleophile in the catalytic mechanism.

Belongs to the glycosyl hydrolase 1 family.

It catalyses the reaction 6-phospho-beta-D-glucosyl-(1-&gt;4)-D-glucose + H2O = D-glucose 6-phosphate + D-glucose. The polypeptide is 6-phospho-beta-glucosidase (abgA) (Clostridium longisporum).